We begin with the raw amino-acid sequence, 579 residues long: Effector protein HopAB3 (579 aa).

Disordered stretches follow at residues 1-140, 214-294, and 384-408; these read MAGI…TGAV, VRQQ…NQVP, and PARA…PDSA. The segment at 1–336 is host recognition; Pto interaction; sequence MAGINGAGPS…LRAALERHIL (336 aa). 5 stretches are compositionally biased toward low complexity: residues 23 to 39, 89 to 101, 219 to 248, 266 to 281, and 384 to 402; these read ASGG…SSNS, RPQE…APQA, ASAP…ESSS, NQRR…ASQR, and PARA…ATVS. The interval 337–579 is E3 ubiquitin-protein ligase; sequence HRRPIPMDIA…IAKYAFRIVP (243 aa).

This sequence belongs to the HopAB family. Interacts physically with plant cell Pto. Auto-ubiquitinated.

It is found in the secreted. Its function is as follows. Effector protein involved in gene-for-gene resistance in tomato plants. It is recognized by the host Pto resistance protein and elicits Pto and Prf-dependent hypersensitive response (HR) and programmed cell death (PCD), resulting in host immunity. In susceptible plants, acts as a virulence factor by suppressing PCD and HR-based plant immunity. This function requires its E3 ubiquitin ligase activity probably by recruiting E2 enzymes and transferring ubiquitin molecules to cellular proteins involved in regulation of PCD and targeting them for degradation. Enhances the development of disease symptoms and bacterial growth. The sequence is that of Effector protein HopAB3 (hopAB3) from Pseudomonas syringae pv. tomato.